Reading from the N-terminus, the 777-residue chain is Disintegrin and metalloproteinase domain-containing protein 5 (777 aa).

The N-terminal stretch at 1-16 (MFLVLVLLTGLGRLYA) is a signal peptide. Positions 17-142 (GNNPRKTFVQ…VLSGFTHMIY (126 aa)) are excised as a propeptide. Residues 17 to 706 (GNNPRKTFVQ…RGYVVLSTKR (690 aa)) lie on the Extracellular side of the membrane. N-linked (GlcNAc...) asparagine glycans are attached at residues Asn49 and Asn123. The Peptidase M12B domain occupies 185–382 (RYIDMYIVVN…YGLTCLRNTS (198 aa)). Cystine bridges form between Cys294/Cys377, Cys336/Cys361, Cys338/Cys343, and Cys456/Cys477. The region spanning 396-485 (RRICGNSIRE…DCVHDTYAQN (90 aa)) is the Disintegrin domain. The N-linked (GlcNAc...) asparagine glycan is linked to Asn566. In terms of domain architecture, EGF-like spans 633–667 (NNGSCNAEIHCQGRGICNNLDNCHCHKGFVPPECA). 3 disulfide bridges follow: Cys637–Cys649, Cys643–Cys655, and Cys657–Cys666. A helical transmembrane segment spans residues 707 to 727 (FQLIFYIGIPVIIIVAAILIK). At 728–777 (QNQLGKLFCRGEKEHMSSVSEDGSRSVTLSATESKFPADTEHSNKEEDAQ) the chain is on the cytoplasmic side. Residues 744–760 (SSVSEDGSRSVTLSATE) are compositionally biased toward polar residues. The segment at 744-777 (SSVSEDGSRSVTLSATESKFPADTEHSNKEEDAQ) is disordered. A compositionally biased stretch (basic and acidic residues) spans 763-777 (FPADTEHSNKEEDAQ).

In terms of assembly, interacts with TEX101. Post-translationally, subject to proteolytic processing during epididymal transit of spermatozoa. As to expression, detected in testis.

It localises to the membrane. This is a non catalytic metalloprotease-like protein. May play a role in sperm-egg fusion. This is Disintegrin and metalloproteinase domain-containing protein 5 (ADAM5) from Cavia porcellus (Guinea pig).